A 363-amino-acid chain; its full sequence is Phospho-N-acetylmuramoyl-pentapeptide-transferase (363 aa).

10 helical membrane-spanning segments follow: residues 33–53 (YAVLMGIALYAGFFFTYGVLP), 82–102 (GVIFVSVFVLLVYLLMRPSFV), 105–125 (LILLLTWGVMLTGYLDDCAQV), 133–153 (GALDFLFAVLTAALLGHFYFH), 166–186 (PVFVSPFLFFAGSVVILWMSI), 198–218 (LSGALVLMALLSMGTIFYFLL), 227–247 (LLVPFVVDGAQWALMSFALAG), 271–291 (ALGFFIGVLVLISGNPFLLLM), 295–315 (VILVNGGTGLLKVVLLRFFHV), and 340–360 (VLLRFMILQGLLTIGLLGVLF).

This sequence belongs to the glycosyltransferase 4 family. MraY subfamily. Mg(2+) serves as cofactor.

The protein resides in the cell inner membrane. It carries out the reaction UDP-N-acetyl-alpha-D-muramoyl-L-alanyl-gamma-D-glutamyl-meso-2,6-diaminopimeloyl-D-alanyl-D-alanine + di-trans,octa-cis-undecaprenyl phosphate = di-trans,octa-cis-undecaprenyl diphospho-N-acetyl-alpha-D-muramoyl-L-alanyl-D-glutamyl-meso-2,6-diaminopimeloyl-D-alanyl-D-alanine + UMP. It functions in the pathway cell wall biogenesis; peptidoglycan biosynthesis. Functionally, catalyzes the initial step of the lipid cycle reactions in the biosynthesis of the cell wall peptidoglycan: transfers peptidoglycan precursor phospho-MurNAc-pentapeptide from UDP-MurNAc-pentapeptide onto the lipid carrier undecaprenyl phosphate, yielding undecaprenyl-pyrophosphoryl-MurNAc-pentapeptide, known as lipid I. The protein is Phospho-N-acetylmuramoyl-pentapeptide-transferase of Treponema pallidum (strain Nichols).